The following is a 467-amino-acid chain: Matrix metalloproteinase-18 (467 aa).

An N-terminal signal peptide occupies residues 1–17 (MNSLLLKLLLCVAITAA). Residues 18–99 (FPADKQDEPP…PRCGVYDVGQ (82 aa)) constitute a propeptide that is removed on maturation. The Cysteine switch motif lies at 90-97 (PRCGVYDV). Zn(2+) is bound by residues Cys-92 and His-218. Glu-219 is a catalytic residue. Residues His-222 and His-228 each coordinate Zn(2+). 4 Hemopexin repeats span residues 277-326 (PSRC…WPSL), 327-373 (PTNI…GFPK), 375-423 (VKRI…FPGI), and 424-467 (PDKI…WLGC). A disulfide bridge links Cys-280 with Cys-467.

Belongs to the peptidase M10A family. Zn(2+) serves as cofactor. The cofactor is Ca(2+). As to expression, expressed only transiently in whole animal, at time when tadpole feeding begins.

The protein resides in the secreted. Its subcellular location is the extracellular space. It is found in the extracellular matrix. With respect to regulation, up-regulated in the tail by thyroid hormone. Cleaves collagen type I. May play a role in larval tissue degeneration and adult organogenesis during amphibian metamorphosis. May be involved in tail resorption. The sequence is that of Matrix metalloproteinase-18 (mmp18) from Xenopus laevis (African clawed frog).